An 836-amino-acid chain; its full sequence is Zinc fingers and homeoboxes protein 2 (836 aa).

Residues 24 to 58 (LEEADRAKDKGLGVPPSDVSKERWAAEPEPSSKES) form a disordered region. An interaction with EFNB1 region spans residues 27–77 (ADRAKDKGLGVPPSDVSKERWAAEPEPSSKESEVVEVRSVGESQSKKLQGG). Over residues 42–58 (VSKERWAAEPEPSSKES) the composition is skewed to basic and acidic residues. 2 C2H2-type zinc fingers span residues 78-101 (YECK…DMQH) and 110-133 (YVCA…SKFH). The segment at 168-210 (SAPGSSDNDPGVSVGKTATVKTGKQKADAKKVPKKPDEAAPDN) is disordered. A compositionally biased stretch (basic and acidic residues) spans 192–210 (QKADAKKVPKKPDEAAPDN). The required for homodimerization stretch occupies residues 195-358 (DAKKVPKKPD…PAQLTPTKVS (164 aa)). 4 DNA-binding regions (homeobox) span residues 263 to 324 (NTTK…WSPE), 439 to 501 (TPAS…IVHI), 530 to 591 (AQKF…EQAV), and 628 to 690 (SPSS…TLSW). The interval 263-446 (NTTKYNSALD…PLTPASDRKK (184 aa)) is required for repressor activity. The interval 263–497 (NTTKYNSALD…SDHRYRCQRG (235 aa)) is required for interaction with NFYA. Residues 317–446 (HGISWSPEEV…PLTPASDRKK (130 aa)) are required for nuclear localization. Residues 404–442 (GQKRPLVTPQAAPEPKRPHIAQVPEPPPKVANTPLTPAS) are disordered. A Glycyl lysine isopeptide (Lys-Gly) (interchain with G-Cter in SUMO2) cross-link involves residue lysine 455. Composition is skewed to basic and acidic residues over residues 700 to 709 (SDDHGHDVAS) and 730 to 746 (YAKD…EKLV). Positions 700 to 836 (SDDHGHDVAS…DSTPAEAGQA (137 aa)) are disordered. Residues serine 824 and serine 826 each carry the phosphoserine modification.

This sequence belongs to the ZHX family. In terms of assembly, homodimer (via homeobox domain 1). Heterodimer with ZHX1 (via homeobox domain 1). Heterodimer with ZHX3 (via homeobox domain 1). Heterodimerization with ZHX1 is not necessary for repressor activity. Interacts (via homeobox domain) with NFYA (via N-terminus). Interacts with EFNB1 intracellular domain peptide; the interaction enhances ZHX2 transcriptional repression activity.

It localises to the nucleus. In terms of biological role, acts as a transcriptional repressor. Represses the promoter activity of the CDC25C gene stimulated by NFYA. May play a role in retinal development where it regulates the composition of bipolar cell populations, by promoting differentiation of bipolar OFF-type cells. In the brain, may promote maintenance and suppress differentiation of neural progenitor cells in the developing cortex. This Rattus norvegicus (Rat) protein is Zinc fingers and homeoboxes protein 2 (Zhx2).